A 1460-amino-acid polypeptide reads, in one-letter code: MATNARILGFNSPSALVAAGDDFLLGAGGGIVIRRKEESSQWIPCEGRYAIGALAFSPSAGLLCVTEVKLDVSLHVFRFPERHHLQCIDNVATVDVQHMLFSSDGEMLALLTCIPTTCVTFYSAARGNRLVKCASTELGGVFCKHLTFPLHRHDCIAVLEPHGVRIACNMDSATFVPSILTLSSKGHYFHSCVWGTEGLYCGAGRGQVVLLDELRTDMKNYINCETPHNVTALLQNGTLLFIGTECGDVFTYNIDQKAQRLLVRLGRSVVRLLTLPDVNDVLVATSTDVTKISVDTAQSVFVRRRSASDTVKLLVLGGLVVIVCLDGSLVTYDQDTNTAGHTPVRFPEKVVDACVVGSVAVVVYDSGFVRSFTVENTVSVVSQMKVSDCPLTACTSDGVSLLAVCDKNVVHFIEVADGLLETAASSDIFACAVTNLRWAVNGGRSVLAACNNGEVHNLRFTGKCDSASAGVTVDMTWRLDFPVNDFLPLYGDGDVINIFVHSVDKDTKMYALERQRVKESKPLRPYFLMRDHECGGNVLQRLGGDSIISAGGDGRVVVRDISHYLMKLPPVPPTKEKKHPLKEFLLRPFGRGGITCLSVWNAAGGFVCGGNDSVVHLVPVGKSPIHYSWSEPFWHQRAISTSPSRASSPSDAETLSAERSRCRIISALADLRMEVEKLLQERTPTVRAEDFLLPEQRQAFNEECEMEIHKAREDDYYSLVHNEFVQHTIKTECWDVMEVQRSKIVSMTDPETEVHNFHLRKPCAQRAKIQKKIKLMRAIQIKTEECFTLSSLVKRAKEGNLCTEQQVCGPPSDVDELLYDTLDVYTGPRATIQLILLECKILHEKKSFNIRFDTLRERKSRELNLIAERNGRCVRIMQQLGEHTCPPNVLFTPVFDIEEDPQTVFEVFDSEIDPELLKLAVKSDDGELVVSPSDEAALKTWMDGLEKVTEVLRVNVPIPPFADNSLEQYVPPEERSDEQQRIFEEYEKEVAEQTVLINEKKELLRGEVAALVKANMTSAKAIDDEIDVLRTDRMLVAQLVDELELHQVNALCLFLLKKTIRNKFLGVKREEEDLLCRLRQLDSLYEYRLKLYLASEARVQDCIEEEKNMITDMRCLPPFTDPDWGERLNRRFTTWRSKYEDGLAKVPEPTRSGVVPIPLWEQYCQCCRAVVEARDKIIHLRGEADALNDEVVEVETEKKKAQFALDDKEKAEEACRKEVIEKVLDIQNLYTLQQGQVQDENAMVSDDFTDFSIRWVKNITDYNDLIFASFDEIRSLMSRSSQLRQSMKTCSWETERLLYCIGTLEMELRQLHTLRVTRQMQETIHTGAVTSLEREINKMDARIEAVRSVMSKKVEERNRVISKLKMQINDRRAENQYLNNQVQALTNSVEDKKAVWGMLGEHNNDKDRLRERMRELYENSELEELARCQQEELVRLKNEVDRLREATFPSFAVVTRRTAR.

WD repeat units follow at residues 46 to 87 (EGRY…HLQC), 91 to 132 (VATV…RLVK), 184 to 221 (SKGH…MKNY), 303 to 342 (RRRS…AGHT), 428 to 468 (IFAC…DSAS), 529 to 569 (MRDH…MKLP), 589 to 628 (FGRG…IHYS), 911 to 951 (EIDP…VTEV), and 1129 to 1170 (NRRF…CRAV). 2 coiled-coil regions span residues 1170–1214 (VVEA…AEEA) and 1399–1446 (LGEH…LREA).

This sequence belongs to the CFAP43 family.

The protein resides in the cell projection. The protein localises to the cilium. Its subcellular location is the flagellum. It is found in the cytoplasm. It localises to the cytoskeleton. The protein resides in the flagellum axoneme. In terms of biological role, flagellar protein involved in flagellum axoneme organization and function. This Trypanosoma brucei brucei (strain 927/4 GUTat10.1) protein is Cilia- and flagella-associated protein 43.